Here is a 503-residue protein sequence, read N- to C-terminus: MHVLFLGDLMWIYLLLLCCASCNGRPDPRKRDALIGLEASRRTGGDITLNEREKLLDGKLQKLKQHDMEAGQFPPSMHFFKAKRLIDQSPVFNLIQKMPKGAALHVHDFAMVSVDWLVKNVTYRENCYVCFTDKQTVQFIFSSGPPASSSYCSSWTLLRSLREKIKNTTELDNSFIRNLTLFTEDPDRAYPNQDTVWERFEQVFLVAYGLVTYAPVFKDYLYEGLRQFYEDNIMYVEIRALLPQTYELDGRLNDKDWSMAACQEVVNQFKKHHPDFIGARVIFTVHRKINATEAVKTVEEAMILRRNFPDVMAGFDFVGQEDLGRPLWYFKDALSLPEDKGFNLPYFFHAGETDSQGTDVDQNLMDALLFNTTRIGHGFALARHPVVKEMARKMDVPIEVCPISNQVLKLVSDLRDHPAAVLMAEGHPLVISSDDPAVFGATALSHDFYEAFMGFGGMSFNLGTLKELALNSLRYSTLPSQRKEEAIDALLVKWDKFVWESLL.

The signal sequence occupies residues 1–24; sequence MHVLFLGDLMWIYLLLLCCASCNG. His-105 and His-107 together coordinate Zn(2+). Position 108 (Asp-108) interacts with substrate. Asn-120 carries an N-linked (GlcNAc...) asparagine glycan. The cysteines at positions 130 and 152 are disulfide-linked. N-linked (GlcNAc...) asparagine glycans are attached at residues Asn-167 and Asn-178. Residues 197–204 and His-286 contribute to the substrate site; that span reads WERFEQVF. A glycan (N-linked (GlcNAc...) asparagine) is linked at Asn-290. Gly-319 is a substrate binding site. His-349 contributes to the Zn(2+) binding site. The active-site Proton donor is the Glu-352. A glycan (N-linked (GlcNAc...) asparagine) is linked at Asn-371. His-377 serves as the catalytic Proton acceptor. Asp-434 contributes to the Zn(2+) binding site. A substrate-binding site is contributed by Asp-435.

The protein belongs to the metallo-dependent hydrolases superfamily. Adenosine and AMP deaminases family. ADGF subfamily. Requires Zn(2+) as cofactor.

It localises to the secreted. It catalyses the reaction adenosine + H2O + H(+) = inosine + NH4(+). Functionally, adenosine deaminase that may contribute to the degradation of extracellular adenosine, a signaling molecule that controls a variety of cellular responses. May play a role in the regulation of cell proliferation. The polypeptide is Adenosine deaminase 2-A (Danio rerio (Zebrafish)).